Here is a 351-residue protein sequence, read N- to C-terminus: Fe-S cluster assembly protein DRE2 (351 aa).

The interval 1–151 (MATTGRVLLL…KPDIGAQQAI (151 aa)) is N-terminal SAM-like domain. 2 disordered regions span residues 93–118 (RNRE…RYND) and 157–186 (RRRK…PSSN). 2 stretches are compositionally biased toward polar residues: residues 105 to 114 (GNGSNANSSR) and 167 to 186 (TLAS…PSSN). The segment at 152-243 (PLKLSRRRKE…EDELLDEDDM (92 aa)) is linker. 4 residues coordinate [2Fe-2S] cluster: C253, C264, C267, and C269. The tract at residues 253 to 269 (CRPKPGKRRRACKDCSC) is fe-S binding site A. The [4Fe-4S] cluster site is built by C314, C317, C325, and C328. 2 consecutive short sequence motifs (cx2C motif) follow at residues 314-317 (CGNC) and 325-328 (CDGC). Residues 314-328 (CGNCSLGDAFRCDGC) are fe-S binding site B.

The protein belongs to the anamorsin family. Monomer. Interacts with TAH18. Interacts with MIA40. It depends on [2Fe-2S] cluster as a cofactor. [4Fe-4S] cluster serves as cofactor.

Its subcellular location is the cytoplasm. It localises to the mitochondrion intermembrane space. In terms of biological role, component of the cytosolic iron-sulfur (Fe-S) protein assembly (CIA) machinery required for the maturation of extramitochondrial Fe-S proteins. Part of an electron transfer chain functioning in an early step of cytosolic Fe-S biogenesis, facilitating the de novo assembly of a [4Fe-4S] cluster on the scaffold complex CFD1-NBP35. Electrons are transferred to DRE2 from NADPH via the FAD- and FMN-containing protein TAH18. TAH18-DRE2 are also required for the assembly of the diferric tyrosyl radical cofactor of ribonucleotide reductase (RNR), probably by providing electrons for reduction during radical cofactor maturation in the catalytic small subunit RNR2. The polypeptide is Fe-S cluster assembly protein DRE2 (Ajellomyces capsulatus (strain NAm1 / WU24) (Darling's disease fungus)).